The chain runs to 375 residues: Mitochondrial phosphate carrier protein 3, mitochondrial (375 aa).

A helical transmembrane segment spans residues 76–96 (AFYAACTFGGILSCGLTHMTV). Solcar repeat units lie at residues 76 to 160 (AFYA…FKKT), 173 to 257 (YKTL…IVEM), and 274 to 353 (LQLG…FKVF). Topologically, residues 97–134 (TPLDLVKCNMQIDPAKYKSISSGFGILLKEQGVKGFFR) are mitochondrial matrix. A helical transmembrane segment spans residues 135-154 (GWVPTLLGYSAQGACKFGFY). Topologically, residues 155 to 175 (EYFKKTYSDLAGPEYTAKYKT) are mitochondrial intermembrane. Residues 176 to 196 (LIYLAGSASAEIIADIALCPF) form a helical membrane-spanning segment. Topologically, residues 197–231 (EAVKVRVQTQPGFARGMSDGFPKFIKSEGYGGLYK) are mitochondrial matrix. A helical membrane pass occupies residues 232 to 251 (GLAPLWGRQIPYTMMKFASF). The Mitochondrial intermembrane segment spans residues 252–272 (ETIVEMIYKYAIPNPKSECSK). A helical transmembrane segment spans residues 273–293 (GLQLGVSFAGGYVAGVFCAIV). At 294 to 332 (SHPADNLVSFLNNAKGATVGDAVKKIGMVGLFTRGLPLR) the chain is on the mitochondrial matrix side. A helical transmembrane segment spans residues 333 to 353 (IVMIGTLTGAQWGLYDAFKVF). Topologically, residues 354–375 (VGLPTTGGVAPAPAIAATEAKA) are mitochondrial intermembrane.

This sequence belongs to the mitochondrial carrier (TC 2.A.29) family. In terms of tissue distribution, expressed in stems, leaves and flowers. Strong expression in vascular tissues.

The protein resides in the mitochondrion inner membrane. Its function is as follows. Transport of phosphate groups from the cytosol to the mitochondrial matrix. Mediates salt stress tolerance through an ATP-dependent pathway and via modulation of the gibberellin metabolism. The sequence is that of Mitochondrial phosphate carrier protein 3, mitochondrial (MPT3) from Arabidopsis thaliana (Mouse-ear cress).